A 336-amino-acid polypeptide reads, in one-letter code: Holliday junction branch migration complex subunit RuvB (336 aa).

Positions 4–184 (ADRLISATGV…FGIVQRLEFY (181 aa)) are large ATPase domain (RuvB-L). Residues isoleucine 23, arginine 24, glycine 65, lysine 68, threonine 69, threonine 70, 131-133 (EDY), arginine 174, tyrosine 184, and arginine 221 contribute to the ATP site. Residue threonine 69 coordinates Mg(2+). The tract at residues 185 to 255 (NVKDLTDIVS…IAARAMDMLD (71 aa)) is small ATPAse domain (RuvB-S). Residues 258–336 (NEGFDFMDRK…HFGLQRPDER (79 aa)) form a head domain (RuvB-H) region. DNA is bound by residues arginine 313 and arginine 318.

This sequence belongs to the RuvB family. In terms of assembly, homohexamer. Forms an RuvA(8)-RuvB(12)-Holliday junction (HJ) complex. HJ DNA is sandwiched between 2 RuvA tetramers; dsDNA enters through RuvA and exits via RuvB. An RuvB hexamer assembles on each DNA strand where it exits the tetramer. Each RuvB hexamer is contacted by two RuvA subunits (via domain III) on 2 adjacent RuvB subunits; this complex drives branch migration. In the full resolvosome a probable DNA-RuvA(4)-RuvB(12)-RuvC(2) complex forms which resolves the HJ.

It is found in the cytoplasm. The enzyme catalyses ATP + H2O = ADP + phosphate + H(+). Functionally, the RuvA-RuvB-RuvC complex processes Holliday junction (HJ) DNA during genetic recombination and DNA repair, while the RuvA-RuvB complex plays an important role in the rescue of blocked DNA replication forks via replication fork reversal (RFR). RuvA specifically binds to HJ cruciform DNA, conferring on it an open structure. The RuvB hexamer acts as an ATP-dependent pump, pulling dsDNA into and through the RuvAB complex. RuvB forms 2 homohexamers on either side of HJ DNA bound by 1 or 2 RuvA tetramers; 4 subunits per hexamer contact DNA at a time. Coordinated motions by a converter formed by DNA-disengaged RuvB subunits stimulates ATP hydrolysis and nucleotide exchange. Immobilization of the converter enables RuvB to convert the ATP-contained energy into a lever motion, pulling 2 nucleotides of DNA out of the RuvA tetramer per ATP hydrolyzed, thus driving DNA branch migration. The RuvB motors rotate together with the DNA substrate, which together with the progressing nucleotide cycle form the mechanistic basis for DNA recombination by continuous HJ branch migration. Branch migration allows RuvC to scan DNA until it finds its consensus sequence, where it cleaves and resolves cruciform DNA. The protein is Holliday junction branch migration complex subunit RuvB of Aeromonas salmonicida (strain A449).